Reading from the N-terminus, the 146-residue chain is Transcriptional regulator MraZ (146 aa).

SpoVT-AbrB domains lie at 5–51 and 80–123; these read NHPT…PLQE and GQMV…NHEA.

It belongs to the MraZ family. Forms oligomers.

The protein resides in the cytoplasm. It is found in the nucleoid. The sequence is that of Transcriptional regulator MraZ from Acidobacterium capsulatum (strain ATCC 51196 / DSM 11244 / BCRC 80197 / JCM 7670 / NBRC 15755 / NCIMB 13165 / 161).